Reading from the N-terminus, the 170-residue chain is MPLTWKDSGLRWYWVVVLVFLADQLSKQWVLANFDLFESVKLLPFFNFTYVRNYGAAFSFLSEAGGWQRWLFTLVAVGFSTLLTVWLRKQSASLWKLNLAYTLVIGGALGNLIDRLMHGFVVDFIDFYWGKSHYPAFNIADSAIFIGAVLIIWDSFFNSKSEQDKTEEVK.

3 helical membrane-spanning segments follow: residues 12–32 (WYWV…WVLA), 67–87 (WQRW…TVWL), and 93–113 (SLWK…GNLI). Residues D123 and D141 contribute to the active site. The chain crosses the membrane as a helical span at residues 137–157 (FNIADSAIFIGAVLIIWDSFF).

The protein belongs to the peptidase A8 family.

It localises to the cell inner membrane. The catalysed reaction is Release of signal peptides from bacterial membrane prolipoproteins. Hydrolyzes -Xaa-Yaa-Zaa-|-(S,diacylglyceryl)Cys-, in which Xaa is hydrophobic (preferably Leu), and Yaa (Ala or Ser) and Zaa (Gly or Ala) have small, neutral side chains.. The protein operates within protein modification; lipoprotein biosynthesis (signal peptide cleavage). This protein specifically catalyzes the removal of signal peptides from prolipoproteins. The chain is Lipoprotein signal peptidase from Shewanella sp. (strain MR-4).